A 962-amino-acid chain; its full sequence is MADRTPKRSADGLIHDAKPSKVTKNDRPPVIDFKRILAAKIAEKRGGPPVSAVSLIAASTVSTPAPVTYGSVGLPTRQLSDSDDDDEEDNATAKTHSVPIPVFKPPDQLTAPHTVKRKPTQPPTPTRPVHQAQATQRRPVVSYDTTGRRATTQDEITDAFGELDNELRRLAALTPVPGGWPESTRGERNQMVNPVGVKELPIVVQSITDRAIQIENRLEAQFHGATEMVKTVVPTVSVRGGVFTRHVITDTKRQPFLIEACEFIPSMIQEAPIPFRAVASKPFAAGTKLLTPKAGAPAVDLRAAPVLGKGYFGTVYKVGNLACKVQHGRVMPGVSNAISDVVEESLLGSRLQHPNIITFVKGFLYHGAVNTEAVCVSLWELGLMDLLSFTQQSFWQPGKDACDPLVKRYLARRFEKHTLLGLEHLHERGLMHRDIKSQNIFIFTNRGRLVAKLGDLGCCSKGAFCDAGGTRAYFPPETLAINVQCCASDMWAWGVTMWEVHTGRTPFWGGTDISMQKVFRYTGGFDNRAYNQLAVARHAMAAADSAVKPVPDLEGLMERGKVSLSPSFTDIMKSVLRLNPNDRATASDLLKSPRYTDESLTEGCECTDRKSLEKNAPEMIRLLEHNHLPPQKVIMTTDPHERDQLAEKERWGQVPMEVTGDFRPAPLYMPWLARADMGDDHTAKKLITLTPRDLVSVYPVVATKEYGVKEIRVYRPPEFSPTYDIVYLELKPTIDFEAIQSLMEGIQAIQKSIPYVVPVFHYTLGAHGTKRYMIYVTPAKRSITELNFDGETDDGTLLGAVILKQLISLAVAFRDNGINFITNMYNTHILYHDPRGVDIGPLKLDMVIYMLLHQTNNLNVYKLSSTDRTLRDPGDPVLKTCLAAYTYVKLLMSAPRALERLVPKTTISACKRFDDFFMIPTVKKISIPPDTKIKVPKLFSFIKIEPPQDISGGTVYASGTLS.

Disordered stretches follow at residues 1-28 and 62-152; these read MADR…NDRP and STPA…RATT. Residues 81-90 show a composition bias toward acidic residues; it reads DSDDDDEEDN. A compositionally biased stretch (polar residues) spans 143 to 152; the sequence is YDTTGRRATT. The Protein kinase domain occupies 301–595; that stretch reads LRAAPVLGKG…ASDLLKSPRY (295 aa). ATP contacts are provided by residues 307-315 and lysine 324; that span reads LGKGYFGTV. Aspartate 434 (proton acceptor) is an active-site residue.

Belongs to the protein kinase superfamily. Ser/Thr protein kinase family.

It catalyses the reaction L-seryl-[protein] + ATP = O-phospho-L-seryl-[protein] + ADP + H(+). The enzyme catalyses L-threonyl-[protein] + ATP = O-phospho-L-threonyl-[protein] + ADP + H(+). The sequence is that of Protein kinase ORF73 (ORF73) from Ictaluridae (bullhead catfishes).